Consider the following 4965-residue polypeptide: Auxin transport protein BIG (4965 aa).

3 helical membrane passes run 289 to 309 (SDIC…IFSP), 646 to 666 (ACLA…AYEV), and 772 to 792 (LFLI…YEGL). The tract at residues 1383 to 1425 (TNQESNSTVDCDASSGEEDEDDGTSDGELVSIDRDEEEDGNSE) is disordered. The span at 1397–1407 (SGEEDEDDGTS) shows a compositional bias: acidic residues. The segment at 1431–1502 (KVCTFTSSGS…RGSSCQCLKP (72 aa)) adopts a UBR-type zinc-finger fold. Positions 2437–2456 (DDAPDNHAKASAASNSTTGN) are disordered. Low complexity predominate over residues 2445–2456 (KASAASNSTTGN). The segment at 2469–2528 (SVQYCCDGCSTVPILRRRWHCNICPDFDLCETCYEILDADRLPAPHSRDHPMSAIPIELD) adopts a ZZ-type zinc-finger fold. Positions 2474, 2477, 2489, 2492, 2498, 2501, 2514, and 2518 each coordinate Zn(2+). The segment at 2997 to 3037 (NAQKTESGDIGSSTRTGSQSSDSKKKRKGDDSSEGSSEKSC) is disordered. The segment covering 3007-3017 (GSSTRTGSQSS) has biased composition (low complexity). A compositionally biased stretch (basic and acidic residues) spans 3024-3037 (KGDDSSEGSSEKSC). An MYND-type; degenerate zinc finger spans residues 3319 to 3359 (CPRCSRSVTDKHGICSNCHENAYQCRQCRNINYENLDSFLC). A disordered region spans residues 3672-3721 (PKSDSGEKEPGMGKSSLMQAKNDDTVGHSVTNLSTSKTQSELSGKIPDGS). Residues 3699-3713 (HSVTNLSTSKTQSEL) are compositionally biased toward polar residues. The tract at residues 4433–4963 (PSIPLILSML…DFVRAIIHGA (531 aa)) is UBR4 E3 catalytic module. Residues 4562–4681 (GLACMVCREG…WDQLNSLGRA (120 aa)) form a HemiRING-type zinc finger. Zn(2+) is bound by residues C4565, C4568, H4615, and C4618. The UZI domain occupies 4684–4963 (SRLRLLTYDI…DFVRAIIHGA (280 aa)). Residues 4753 to 4770 (SSSPSTPESPVRLSALSG) are compositionally biased toward low complexity. Disordered stretches follow at residues 4753–4778 (SSSP…SGSS) and 4822–4846 (STLK…ADSN). A compositionally biased stretch (polar residues) spans 4824–4845 (LKLSADTSSSAVRSDEGSSADS).

This sequence belongs to the UBR4 family.

Its subcellular location is the membrane. Functionally, required for auxin efflux and polar auxin transport (PAT) influencing auxin-mediated developmental responses (e.g. cell elongation, apical dominance, lateral root production, inflorescence architecture, general growth and development). In Oryza sativa subsp. japonica (Rice), this protein is Auxin transport protein BIG.